The sequence spans 473 residues: Mitochondrial adenyl nucleotide antiporter SLC25A24-B (473 aa).

A regulatory N-terminal domain region spans residues 1 to 173 (MLEQVQKFLL…RYWKHSTVLD (173 aa)). Over 1 to 197 (MLEQVQKFLL…EKKTGQWWKQ (197 aa)) the chain is Mitochondrial intermembrane. EF-hand domains follow at residues 19-54 (DSQSRYEELFHKLDVNKDGKVDILELQEGLKAMGME), 55-88 (VGKGAEEKIVAAGDTNKDGHLDFGEFIRYLEEHE), 86-121 (EHEKKMKIAFTSLDKNKDGKIESAEIMNSLKVLGIK), and 122-157 (ISLDHADKILKSMDSDGTLTVDWNEWRDHFLFNPAD). Residues D32, N34, D36, K38, E43, D68, N70, D72, H74, E79, D99, N101, D103, K105, E110, D135, D137, T139, T141, and E146 each coordinate Ca(2+). Positions 159–168 (IQQIIRYWKH) are linker region. Residues 174–473 (IGDSLTIPDE…YEKMKVQLGI (300 aa)) form a C-terminal transmembrane transporter domain region. Solcar repeat units follow at residues 192-277 (GQWW…YKKL), 285-370 (LGTA…LKNY), and 382-470 (PGVL…MKVQ). Residues 198–215 (LMAGGMAGAVSRTGTAPL) form a helical membrane-spanning segment. The Mitochondrial matrix segment spans residues 216 to 251 (DRLKVMMQVHGSKGNSNIITGLKQMVKEGGIRSLWR). A helical membrane pass occupies residues 252–271 (GNGVNVIKIAPETAMKFWAY). Residues 272 to 294 (EQYKKLFTSESGKLGTAERFVAG) lie on the Mitochondrial intermembrane side of the membrane. Residues 295–308 (SLAGATAQTSIYPM) traverse the membrane as a helical segment. Residues 309–344 (EVLKTRLAVGRTGQYSGMFDCAKKIMQKEGIRAFYK) are Mitochondrial matrix-facing. The chain crosses the membrane as a helical span at residues 345–364 (GYIPNILGIIPYAGIDLAIY). Residues 365-387 (ETLKNYWLQNHAKDSANPGVLVL) are Mitochondrial intermembrane-facing. The helical transmembrane segment at 388-405 (LGCGTASSTCGQLASYPL) threads the bilayer. The Mitochondrial matrix portion of the chain corresponds to 406-444 (ALIRTRMQAQASIEGAPQLNMGGLFRKIVAKEGFLGLYR). The chain crosses the membrane as a helical span at residues 445 to 464 (GIGPNFLKVLPAVSISYVVY). Over 465–473 (EKMKVQLGI) the chain is Mitochondrial intermembrane.

This sequence belongs to the mitochondrial carrier (TC 2.A.29) family. As to quaternary structure, monomer.

It is found in the mitochondrion inner membrane. The catalysed reaction is Mg(2+)(out) + phosphate(in) + ATP(out) = Mg(2+)(in) + phosphate(out) + ATP(in). It carries out the reaction ADP(out) + phosphate(in) + H(+)(out) = ADP(in) + phosphate(out) + H(+)(in). The enzyme catalyses AMP(out) + phosphate(in) = AMP(in) + phosphate(out). It catalyses the reaction phosphate(in) + ATP(out) + 2 H(+)(out) = phosphate(out) + ATP(in) + 2 H(+)(in). The catalysed reaction is dADP(in) + ADP(out) = dADP(out) + ADP(in). It carries out the reaction Mg(2+)(in) + ADP(out) + ATP(in) + H(+)(out) = Mg(2+)(out) + ADP(in) + ATP(out) + H(+)(in). The enzyme catalyses ADP(out) + diphosphate(in) = ADP(in) + diphosphate(out). It catalyses the reaction dAMP(in) + ADP(out) + H(+)(out) = dAMP(out) + ADP(in) + H(+)(in). The catalysed reaction is 3'-AMP(in) + ADP(out) + H(+)(out) = 3'-AMP(out) + ADP(in) + H(+)(in). It carries out the reaction dAMP(out) + phosphate(in) = dAMP(in) + phosphate(out). The enzyme catalyses 3'-AMP(out) + phosphate(in) = 3'-AMP(in) + phosphate(out). It catalyses the reaction dADP(out) + phosphate(in) + H(+)(out) = dADP(in) + phosphate(out) + H(+)(in). Its activity is regulated as follows. Activated by an increase in cytosolic calcium levels that induce a conformational change of the N-terminal regulatory domain, uncapping the channel and allowing transport. Inhibited by bathophenanthroline, mersalyl, p-hydroxymercuribenzoate, bromcresol purple and tannic acid. Its function is as follows. Electroneutral antiporter that mediates the transport of adenyl nucleotides through the inner mitochondrial membrane. Originally identified as an ATP-magnesium/inorganic phosphate antiporter, it also acts as a broad specificity adenyl nucleotide antiporter. By regulating the mitochondrial matrix adenyl nucleotide pool could adapt to changing cellular energetic demands and indirectly regulate adenyl nucleotide-dependent metabolic pathways. This chain is Mitochondrial adenyl nucleotide antiporter SLC25A24-B (slc25a24-b), found in Xenopus laevis (African clawed frog).